The chain runs to 58 residues: Small ribosomal subunit protein bS21 (58 aa).

Positions 35–58 (REHYEKPSVKRKKKSEAARKRKFK) are disordered. The segment covering 43 to 58 (VKRKKKSEAARKRKFK) has biased composition (basic residues).

It belongs to the bacterial ribosomal protein bS21 family.

In Ruminiclostridium cellulolyticum (strain ATCC 35319 / DSM 5812 / JCM 6584 / H10) (Clostridium cellulolyticum), this protein is Small ribosomal subunit protein bS21.